Reading from the N-terminus, the 1375-residue chain is DNA-directed RNA polymerase subunit beta' (1375 aa).

Zn(2+) is bound by residues cysteine 70, cysteine 72, cysteine 85, and cysteine 88. Residues aspartate 461, aspartate 463, and aspartate 465 each contribute to the Mg(2+) site. Positions 797, 871, 878, and 881 each coordinate Zn(2+).

This sequence belongs to the RNA polymerase beta' chain family. As to quaternary structure, the RNAP catalytic core consists of 2 alpha, 1 beta, 1 beta' and 1 omega subunit. When a sigma factor is associated with the core the holoenzyme is formed, which can initiate transcription. Mg(2+) is required as a cofactor. The cofactor is Zn(2+).

The enzyme catalyses RNA(n) + a ribonucleoside 5'-triphosphate = RNA(n+1) + diphosphate. Functionally, DNA-dependent RNA polymerase catalyzes the transcription of DNA into RNA using the four ribonucleoside triphosphates as substrates. This chain is DNA-directed RNA polymerase subunit beta', found in Neorickettsia sennetsu (strain ATCC VR-367 / Miyayama) (Ehrlichia sennetsu).